Reading from the N-terminus, the 99-residue chain is uncharacterized protein (99 aa).

The TM2 domain maps to 32 to 79 (KKSVGIAVLLSFIIPGAGQMYLGRVGKGIILLLTCWLIIPWIYSIYDA). Helical transmembrane passes span 34-54 (SVGI…MYLG) and 56-76 (VGKG…IYSI).

Its subcellular location is the cell membrane. This is an uncharacterized protein from Methanocaldococcus jannaschii (strain ATCC 43067 / DSM 2661 / JAL-1 / JCM 10045 / NBRC 100440) (Methanococcus jannaschii).